Reading from the N-terminus, the 315-residue chain is Eukaryotic translation initiation factor 2 subunit 1 (315 aa).

Positions 17–88 (EDVVMVNVRS…EKGYIDLSKR (72 aa)) constitute an S1 motif domain. Position 49 is a phosphoserine; by HRI (serine 49). At serine 52 the chain carries Phosphoserine. Position 141 is an N6-acetyllysine (lysine 141). Serine 158 is subject to Phosphoserine. Phosphothreonine occurs at positions 279 and 281. The segment at 292–315 (RLERENAEVDGDDDAEEMEAKAED) is disordered. The segment covering 299–308 (EVDGDDDAEE) has biased composition (acidic residues).

It belongs to the eIF-2-alpha family. As to quaternary structure, eukaryotic translation initiation factor 2 eIF2 is a heterotrimeric complex composed of an alpha (EIF2S1), a beta (EIF2S2) and a gamma (EIF2S3) chain. eIF2 is member of the 43S pre-initiation complex (43S PIC). eIF2 forms a complex with at least CELF1/CUGBP1, CALR, CALR3, EIF2S1, EIF2S2, HSP90B1 and HSPA5. Interaction with METAP2 protects EIF2S1 from inhibitory phosphorylation. Interacts with ABCF1. Associates with ribosomes. Interacts with DDX3X in an RNA-independent manner. Phosphorylation at Ser-49 and Ser-52 stabilizes the eIF-2/GDP/eIF2B complex and prevents GDP/GTP exchange reaction, thus impairing the recycling of eIF-2 between successive rounds of initiation and leading to global inhibition of translation, while concomitantly initiating the preferential translation of integrated stress response (ISR)-specific mRNAs. Substrate for at least 4 kinases: EIF2AK1/HRI, EIF2AK2/PKR, EIF2AK3/PERK and EIF2AK4/GCN2. Phosphorylation at Ser-52 by the EIF2AK3/PERK protein kinase occurs in response to the unfolded protein response. Phosphorylation on Ser-52 by the EIF2AK4/GCN2 protein kinase occurs in response to amino acid starvation and UV irradiation. Phosphorylation at Ser-52 by EIF2AK1/HRI in response to mitochondrial damage promotes relocalization to the mitochondrial surface.

It localises to the cytoplasm. Its subcellular location is the stress granule. The protein localises to the cytosol. The protein resides in the mitochondrion. With respect to regulation, activity is regulated by phosphorylation at Ser-49 and Ser-52, which stabilizes the eIF2/GDP/eIF2B complex and prevents the eIF2B-mediated exchange of GDP for GTP, thereby preventing the formation of the 43S pre-initiation complex (43S PIC). This results in the global attenuation of 5' cap-dependent protein synthesis and concomitant translation of ISR-specific mRNAs that contain a short upstream open reading frame (uORF) in their 5' UTR, such as ATF4, ATF5, DDIT3/CHOP and PPP1R15A/GADD34. Functionally, member of the eIF2 complex that functions in the early steps of protein synthesis by forming a ternary complex with GTP and initiator tRNA. This complex binds to a 40S ribosomal subunit, followed by mRNA binding to form a 43S pre-initiation complex. Junction of the 60S ribosomal subunit to form the 80S initiation complex is preceded by hydrolysis of the GTP bound to eIF2 and release of an eIF2-GDP binary complex. In order for eIF2 to recycle and catalyze another round of initiation, the GDP bound to eIF2 must exchange with GTP by way of a reaction catalyzed by eIF2B. EIF2S1/eIF2-alpha is a key component of the integrated stress response (ISR), required for adaptation to various stress: phosphorylation by metabolic-stress sensing protein kinases (EIF2AK1/HRI, EIF2AK2/PKR, EIF2AK3/PERK and EIF2AK4/GCN2) in response to stress converts EIF2S1/eIF2-alpha in a global protein synthesis inhibitor, leading to a attenuation of cap-dependent translation, while concomitantly initiating the preferential translation of ISR-specific mRNAs, such as the transcriptional activators ATF4 and QRICH1, and hence allowing ATF4- and QRICH1-mediated reprogramming. EIF2S1/eIF2-alpha also acts as an activator of mitophagy in response to mitochondrial damage: phosphorylation by EIF2AK1/HRI promotes relocalization to the mitochondrial surface, thereby triggering PRKN-independent mitophagy. This is Eukaryotic translation initiation factor 2 subunit 1 (EIF2S1) from Sus scrofa (Pig).